Here is a 196-residue protein sequence, read N- to C-terminus: Imidazoleglycerol-phosphate dehydratase (196 aa).

It belongs to the imidazoleglycerol-phosphate dehydratase family.

The protein resides in the cytoplasm. It carries out the reaction D-erythro-1-(imidazol-4-yl)glycerol 3-phosphate = 3-(imidazol-4-yl)-2-oxopropyl phosphate + H2O. It functions in the pathway amino-acid biosynthesis; L-histidine biosynthesis; L-histidine from 5-phospho-alpha-D-ribose 1-diphosphate: step 6/9. The chain is Imidazoleglycerol-phosphate dehydratase from Desulfitobacterium hafniense (strain Y51).